Consider the following 437-residue polypeptide: Protein translocase subunit SecY (437 aa).

Helical transmembrane passes span 19 to 39, 69 to 89, 122 to 142, 157 to 177, 189 to 209, 219 to 239, 275 to 295, 318 to 338, 378 to 398, and 400 to 420; these read LFTLGIIVVYRLGTHIPIPGV, LLQITVFALGIMPYITASIIL, VALAILQGTGLVATARSGALF, IFTTVVMVICMTAGTCVVMWL, GMSILMFISIAATFPSALWAI, WIEFGTVILVGLVMVGLVVFV, GVIPVIFASSLLYIPALIVQF, HIILYFFLIVFFAFFYVAISF, GSLYLGLIALVPTMALAGFGA, and QNFPFGGTSILIIVGVGLETV.

This sequence belongs to the SecY/SEC61-alpha family. In terms of assembly, component of the Sec protein translocase complex. Heterotrimer consisting of SecY, SecE and SecG subunits. The heterotrimers can form oligomers, although 1 heterotrimer is thought to be able to translocate proteins. Interacts with the ribosome. Interacts with SecDF, and other proteins may be involved. Interacts with SecA.

The protein localises to the cell membrane. In terms of biological role, the central subunit of the protein translocation channel SecYEG. Consists of two halves formed by TMs 1-5 and 6-10. These two domains form a lateral gate at the front which open onto the bilayer between TMs 2 and 7, and are clamped together by SecE at the back. The channel is closed by both a pore ring composed of hydrophobic SecY resides and a short helix (helix 2A) on the extracellular side of the membrane which forms a plug. The plug probably moves laterally to allow the channel to open. The ring and the pore may move independently. This Streptomyces lividans protein is Protein translocase subunit SecY.